Consider the following 33-residue polypeptide: Mu-theraphotoxin-Os1a (33 aa).

3 disulfide bridges follow: Cys2–Cys17, Cys9–Cys22, and Cys16–Cys29. Leu33 bears the Leucine amide mark.

This sequence belongs to the neurotoxin 10 (Hwtx-1) family. 14 (Hntx-1) subfamily. Monomer. In terms of tissue distribution, expressed by the venom gland.

Its subcellular location is the secreted. Functionally, potently and reversibly inhibits some human voltage-gated sodium channels (Nav1.1/SCN1A (IC(50)=72.0 nM), Nav1.2/SCN2A (IC(50)=75.5 nM), Nav1.6/SCN8A (IC(50)=115.0 nM), Nav1.7/SCN9A (IC(50)=52.7-129.5 nM), Nav1.3/SCN3A (IC(50)=306.6 nM)). The hNav1.7/SCN9A channel inhibition occurs without any change in steady-state inactivation- and conductance-voltage relationships. On adult mouse DRG neurons, this toxin is approximately 1000-fold more efficient to inhibit tetrodotoxin (TTX)-sensitive than TTX-resistant sodium currents. In vivo, this toxin exhibits analgesic effects in mice pain models. This Omothymus schioedtei (Malaysian earth tiger tarantula) protein is Mu-theraphotoxin-Os1a.